The sequence spans 335 residues: Ankyrin repeat and SOCS box protein 1 (335 aa).

ANK repeat units follow at residues 36–68 (CEDT…RINE), 77–106 (LPCT…EVDL), 110–139 (KGQT…DPNG), 143–172 (HRST…DVDV), 191–220 (LVVC…NPDF), and 235–265 (SPGC…NLNL). Positions 286 to 335 (LQVFKEARSVPRTLLCLCRVAVRRALGKHRLHLIPSLPLPDPIKKFLLHE) constitute an SOCS box domain.

The protein belongs to the ankyrin SOCS box (ASB) family. As to quaternary structure, interacts with CUL5 and RNF7. Interacts with TAB2 and TAB3.

Its subcellular location is the cytoplasm. Its pathway is protein modification; protein ubiquitination. Its function is as follows. Probable substrate-recognition component of a SCF-like ECS (Elongin-Cullin-SOCS-box protein) E3 ligase complex which mediates the ubiquitination and subsequent proteasomal degradation of target proteins. Mediates Notch-induced ubiquitination and degradation of TCF3/E2A and JAK2. Functions as a tumor suppressor by enhancing CHCHD3 'Lys-48'-linked ubiquitination, leading to inhibition of the CHCHD3/ROS signaling pathway. Suppresses TAB2-linked 'Lys-48' polyubiquitination and consequently facilitates the initiation of NF-kappa-B and MAPK signaling cascades. May play a role in testis development. The chain is Ankyrin repeat and SOCS box protein 1 (ASB1) from Homo sapiens (Human).